Reading from the N-terminus, the 745-residue chain is Junction plakoglobin (745 aa).

An N-acetylmethionine modification is found at M1. T14 carries O-linked (GlcNAc) threonine glycosylation. A phosphoserine mark is found at S99 and S125. 12 ARM repeats span residues 132–171 (NYQD…QLSK), 172–215 (KEAS…LSHH), 216–255 (REGL…NLLL), 258–297 (EGAK…LLAY), 298–341 (GNQE…LSVC), 342–381 (PSNK…NLSD), 383–420 (ATKQ…NLTC), 423–464 (SKNK…HLTS), 470–510 (EMAQ…NLAL), 512–551 (PANH…QPYT), 574–613 (PMNR…ELAQ), and 615–661 (KEAA…PDYR). Residues 132–297 (NYQDDAELAT…TTDCLQLLAY (166 aa)) are interaction with DSC1 and DSG1. A Phosphoserine modification is found at S182. Residues 574–661 (PMNRMEIFRL…ISEDKNPDYR (88 aa)) are interaction with DSC1. Phosphoserine occurs at positions 665 and 730.

Belongs to the beta-catenin family. In terms of assembly, homodimer. Component of an E-cadherin/catenin adhesion complex composed of at least E-cadherin/CDH1 and gamma-catenin/JUP, and possibly alpha-catenin/CTNNA1; the complex is located to adherens junctions. The stable association of CTNNA1 is controversial as CTNNA1 was shown not to bind to F-actin when assembled in the complex. Interacts with MUC1. Interacts with CAV1. Interacts with PTPRJ. Interacts with DSG1. Interacts with DSC1 and DSC2. Interacts with PKP2. Interacts with PKP3 (via N-terminus); the interaction is required for PKP3 localization to desmosome cell-cell junctions. Interacts with DSG4. Post-translationally, may be phosphorylated by FER. As to expression, expressed in the heart (at protein level).

The protein localises to the cell junction. The protein resides in the adherens junction. It is found in the desmosome. Its subcellular location is the cytoplasm. It localises to the cytoskeleton. The protein localises to the cell membrane. The protein resides in the nucleus. Its function is as follows. Common junctional plaque protein. The membrane-associated plaques are architectural elements in an important strategic position to influence the arrangement and function of both the cytoskeleton and the cells within the tissue. The presence of plakoglobin in both the desmosomes and in the intermediate junctions suggests that it plays a central role in the structure and function of submembranous plaques. Acts as a substrate for VE-PTP and is required by it to stimulate VE-cadherin function in endothelial cells. Can replace beta-catenin in E-cadherin/catenin adhesion complexes which are proposed to couple cadherins to the actin cytoskeleton. The chain is Junction plakoglobin from Rattus norvegicus (Rat).